We begin with the raw amino-acid sequence, 221 residues long: Lysine N-acyltransferase MbtK (221 aa).

The disordered stretch occupies residues M1 to D34. H141 contributes to the substrate binding site. D179 functions as the Proton acceptor in the catalytic mechanism.

Belongs to the lysine N-acyltransferase MbtK family. Monomer.

Its pathway is siderophore biosynthesis; mycobactin biosynthesis. Acyltransferase required for the direct transfer of medium- to long-chain fatty acyl moieties from a carrier protein (MbtL) on to the epsilon-amino group of lysine residue in the mycobactin core. The sequence is that of Lysine N-acyltransferase MbtK (mbtK) from Mycolicibacterium paratuberculosis (strain ATCC BAA-968 / K-10) (Mycobacterium paratuberculosis).